We begin with the raw amino-acid sequence, 69 residues long: uncharacterized protein (69 aa).

The N-terminal stretch at 1–16 (MSLGLIFALLLTHAAA) is a signal peptide.

This is an uncharacterized protein from Archaeoglobus fulgidus (strain ATCC 49558 / DSM 4304 / JCM 9628 / NBRC 100126 / VC-16).